The sequence spans 230 residues: Ureidoacrylate amidohydrolase RutB (230 aa).

Aspartate 24 acts as the Proton acceptor in catalysis. The active site involves lysine 133. The active-site Nucleophile is the cysteine 166.

This sequence belongs to the isochorismatase family. RutB subfamily.

It carries out the reaction (Z)-3-ureidoacrylate + H2O + H(+) = (Z)-3-aminoacrylate + NH4(+) + CO2. The catalysed reaction is (Z)-3-ureidoacrylate + H2O = (Z)-3-aminoacrylate + carbamate + H(+). The enzyme catalyses (Z)-2-methylureidoacrylate + H2O + H(+) = (Z)-2-methylaminoacrylate + NH4(+) + CO2. Hydrolyzes ureidoacrylate to form aminoacrylate and carbamate. The carbamate hydrolyzes spontaneously, thereby releasing one of the nitrogen atoms of the pyrimidine ring as ammonia and one of its carbon atoms as CO2. This Escherichia coli O150:H5 (strain SE15) protein is Ureidoacrylate amidohydrolase RutB.